We begin with the raw amino-acid sequence, 161 residues long: MTRGPIFLNVGISYGLPRTKLPAAVSFRKWVAATLQGRIRKADLAIRIVDEKEGRALNYHYRNKDYATNVLSFPAQLPEPLPKALKIPLLGDIVMCAPVIAREAAEQGKSLSAHYAHLTVHGTLHLLGWNHEDHQEADAMEQLEREILANLGISDPYLEEY.

The Zn(2+) site is built by histidine 121, histidine 125, and histidine 131.

This sequence belongs to the endoribonuclease YbeY family. Zn(2+) serves as cofactor.

The protein localises to the cytoplasm. In terms of biological role, single strand-specific metallo-endoribonuclease involved in late-stage 70S ribosome quality control and in maturation of the 3' terminus of the 16S rRNA. This chain is Endoribonuclease YbeY, found in Xylella fastidiosa (strain 9a5c).